Here is a 379-residue protein sequence, read N- to C-terminus: ATPase ASNA1 homolog (379 aa).

Residues 1-20 (MSEDESNSVSCSLSLESDGY) are disordered. The span at 7–18 (NSVSCSLSLESD) shows a compositional bias: low complexity. 46 to 53 (KGGVGKTT) is a binding site for ATP. Residue Asp-75 is part of the active site. ATP-binding residues include Glu-246 and Asn-273.

It belongs to the arsA ATPase family. Homodimer.

Its subcellular location is the cytoplasm. The protein resides in the endoplasmic reticulum. ATPase required for the post-translational delivery of tail-anchored (TA) proteins to the endoplasmic reticulum. Recognizes and selectively binds the transmembrane domain of TA proteins in the cytosol. This complex then targets to the endoplasmic reticulum by membrane-bound receptors, where the tail-anchored protein is released for insertion. This process is regulated by ATP binding and hydrolysis. ATP binding drives the homodimer towards the closed dimer state, facilitating recognition of newly synthesized TA membrane proteins. ATP hydrolysis is required for insertion. Subsequently, the homodimer reverts towards the open dimer state, lowering its affinity for the membrane-bound receptor, and returning it to the cytosol to initiate a new round of targeting. This Plasmodium falciparum (isolate 3D7) protein is ATPase ASNA1 homolog.